We begin with the raw amino-acid sequence, 511 residues long: Exodeoxyribonuclease 7 large subunit (511 aa).

The protein belongs to the XseA family. In terms of assembly, heterooligomer composed of large and small subunits.

The protein resides in the cytoplasm. The enzyme catalyses Exonucleolytic cleavage in either 5'- to 3'- or 3'- to 5'-direction to yield nucleoside 5'-phosphates.. In terms of biological role, bidirectionally degrades single-stranded DNA into large acid-insoluble oligonucleotides, which are then degraded further into small acid-soluble oligonucleotides. This is Exodeoxyribonuclease 7 large subunit from Brucella suis (strain ATCC 23445 / NCTC 10510).